The sequence spans 413 residues: Putative competence-damage inducible protein (413 aa).

The protein belongs to the CinA family.

The polypeptide is Putative competence-damage inducible protein (Halothermothrix orenii (strain H 168 / OCM 544 / DSM 9562)).